The chain runs to 79 residues: Dolichyl-diphosphooligosaccharide--protein glycosyltransferase subunit TMEM258 (79 aa).

Helical transmembrane passes span 19 to 39 (PLLTTFLCGVGLLLLATFTMI) and 55 to 75 (FIAATSSVFLGFGSVFLLLWV).

It belongs to the OST5 family. As to quaternary structure, component of the oligosaccharyltransferase (OST) complex.

Its subcellular location is the membrane. It participates in protein modification; protein glycosylation. Subunit of the oligosaccharyl transferase (OST) complex that catalyzes the initial transfer of a defined glycan (Glc(3)Man(9)GlcNAc(2) in eukaryotes) from the lipid carrier dolichol-pyrophosphate to an asparagine residue within an Asn-X-Ser/Thr consensus motif in nascent polypeptide chains, the first step in protein N-glycosylation. N-glycosylation occurs cotranslationally and the complex associates with the Sec61 complex at the channel-forming translocon complex that mediates protein translocation across the endoplasmic reticulum (ER). All subunits are required for a maximal enzyme activity. The sequence is that of Dolichyl-diphosphooligosaccharide--protein glycosyltransferase subunit TMEM258 from Caenorhabditis elegans.